Reading from the N-terminus, the 317-residue chain is Melanocyte-stimulating hormone receptor (317 aa).

Topologically, residues 1 to 37 are extracellular; the sequence is MPAQGSQRSXLGSLNSTLMATPSLGLAANQSGPQCLE. N-linked (GlcNAc...) asparagine glycosylation is found at Asn15 and Asn29. A helical membrane pass occupies residues 38-63; it reads VSVPDGLFLCLGLVSLVENMLVVAAI. At 64–72 the chain is on the cytoplasmic side; the sequence is AKNRNLHSP. A helical membrane pass occupies residues 73–93; the sequence is MYCFICCLALSDLLVSISNVL. Over 94 to 118 the chain is Extracellular; the sequence is ETAVMLLLEAGALAVGATVVQQLDN. Residues 119 to 140 traverse the membrane as a helical segment; it reads VIDVLICSSMVSSLCFLGAIAM. Over 141–163 the chain is Cytoplasmic; the sequence is DRYISIFYALRYHSIVTLSRAQW. Residues 164-183 form a helical membrane-spanning segment; it reads ATAAVWAASILSSTLFIAYY. The Extracellular portion of the chain corresponds to 184 to 191; sequence DRTVVLLC. Residues 192–211 traverse the membrane as a helical segment; the sequence is LVVFFLAMLVLMAVLYAHML. Residues 212 to 240 are Cytoplasmic-facing; that stretch reads TQACQHVQGITRLHKRQHLVQQGFGLKGA. The helical transmembrane segment at 241–266 threads the bilayer; that stretch reads ATLTILLGVFLLCWGPFFLHLTLIAV. At 267 to 279 the chain is on the extracellular side; sequence CPQHPTCSCVFKN. Residues 280 to 300 traverse the membrane as a helical segment; that stretch reads FKLFLALIICNAIVDPLIYAF. Topologically, residues 301 to 317 are cytoplasmic; it reads RSQELRKTLKEVLLFSW.

Belongs to the G-protein coupled receptor 1 family. As to quaternary structure, interacts with MGRN1, but does not undergo MGRN1-mediated ubiquitination; this interaction competes with GNAS-binding and thus inhibits agonist-induced cAMP production. Interacts with OPN3; the interaction results in a decrease in MC1R-mediated cAMP signaling and ultimately a decrease in melanin production in melanocytes.

The protein localises to the cell membrane. Its function is as follows. Receptor for MSH (alpha, beta and gamma) and ACTH. The activity of this receptor is mediated by G proteins which activate adenylate cyclase. Mediates melanogenesis, the production of eumelanin (black/brown) and phaeomelanin (red/yellow), via regulation of cAMP signaling in melanocytes. This Galago senegalensis (Northern lesser bushbaby) protein is Melanocyte-stimulating hormone receptor (MC1R).